Here is a 395-residue protein sequence, read N- to C-terminus: Nicotinamide/nicotinic acid mononucleotide adenylyltransferase 2 (395 aa).

Disordered stretches follow at residues 1 to 34 (MDPT…SGPI) and 62 to 102 (KKNA…NGID). Residues 9 to 24 (FKPPQPNEELQPPPDP) are compositionally biased toward pro residues. 3 positions are modified to phosphoserine: S85, S89, and S90. NAD(+)-binding residues include S167 and F168. ATP is bound by residues H175 and R209. The NAD(+) site is built by T247, G282, D284, W295, R314, and N345. Residue 350–353 (TKVR) participates in ATP binding.

It belongs to the eukaryotic NMN adenylyltransferase family. Requires Co(2+) as cofactor.

Its subcellular location is the nucleus. The catalysed reaction is beta-nicotinamide D-ribonucleotide + ATP + H(+) = diphosphate + NAD(+). It catalyses the reaction nicotinate beta-D-ribonucleotide + ATP + H(+) = deamido-NAD(+) + diphosphate. The protein operates within cofactor biosynthesis; NAD(+) biosynthesis; deamido-NAD(+) from nicotinate D-ribonucleotide: step 1/1. Its pathway is cofactor biosynthesis; NAD(+) biosynthesis; NAD(+) from nicotinamide D-ribonucleotide: step 1/1. Catalyzes the formation of NAD(+) from nicotinamide mononucleotide (NMN) and ATP. Can also use the deamidated form; nicotinic acid mononucleotide (NaMN) as substrate to form deamido-NAD(+) (NaAD). Key enzyme in both de novo and salvage pathways for NAD(+) biosynthesis. Predominantly acts in the salvage pathways via NMN. This is Nicotinamide/nicotinic acid mononucleotide adenylyltransferase 2 from Saccharomyces cerevisiae (strain ATCC 204508 / S288c) (Baker's yeast).